Here is a 345-residue protein sequence, read N- to C-terminus: Myb/SANT-like DNA-binding domain-containing protein 4 (345 aa).

A Myb-like domain is found at 4–77; that stretch reads LKRKRKSNFS…EVKRRYLDWR (74 aa). A Glycyl lysine isopeptide (Lys-Gly) (interchain with G-Cter in SUMO2) cross-link involves residue K9. S106 bears the Phosphoserine mark. Glycyl lysine isopeptide (Lys-Gly) (interchain with G-Cter in SUMO2) cross-links involve residues K114 and K142. Residues 139–175 are disordered; it reads TEVKVEEEERDPQSPEFEIEEEEEMLSSVIPDSRREN. Position 188 is a phosphothreonine (T188). Positions 202–344 form a coiled coil; sequence HLLMNIEKQK…RLRIQKEGHL (143 aa). Residues K237, K254, and K273 each participate in a glycyl lysine isopeptide (Lys-Gly) (interchain with G-Cter in SUMO2) cross-link.

The protein is Myb/SANT-like DNA-binding domain-containing protein 4 (Msantd4) of Mus musculus (Mouse).